A 393-amino-acid polypeptide reads, in one-letter code: S-adenosylmethionine synthase (393 aa).

ATP is bound at residue His-16. Asp-18 contacts Mg(2+). Glu-44 lines the K(+) pocket. L-methionine contacts are provided by Glu-57 and Gln-100. A flexible loop region spans residues 100–110 (QSNDIAQGVDH). ATP contacts are provided by residues 167-169 (DAK), 238-239 (RF), Asp-247, 253-254 (RK), Ala-270, and Lys-274. L-methionine is bound at residue Asp-247. Residue Lys-278 participates in L-methionine binding.

The protein belongs to the AdoMet synthase family. In terms of assembly, homotetramer; dimer of dimers. Mg(2+) serves as cofactor. K(+) is required as a cofactor.

Its subcellular location is the cytoplasm. The enzyme catalyses L-methionine + ATP + H2O = S-adenosyl-L-methionine + phosphate + diphosphate. The protein operates within amino-acid biosynthesis; S-adenosyl-L-methionine biosynthesis; S-adenosyl-L-methionine from L-methionine: step 1/1. In terms of biological role, catalyzes the formation of S-adenosylmethionine (AdoMet) from methionine and ATP. The overall synthetic reaction is composed of two sequential steps, AdoMet formation and the subsequent tripolyphosphate hydrolysis which occurs prior to release of AdoMet from the enzyme. The protein is S-adenosylmethionine synthase of Paracidovorax citrulli (strain AAC00-1) (Acidovorax citrulli).